The primary structure comprises 151 residues: Nucleoside diphosphate kinase (151 aa).

6 residues coordinate ATP: Lys11, Phe59, Arg87, Thr93, Arg104, and Asn114. The active-site Pros-phosphohistidine intermediate is the His117.

This sequence belongs to the NDK family. In terms of assembly, homotetramer. The cofactor is Mg(2+).

It localises to the cytoplasm. It catalyses the reaction a 2'-deoxyribonucleoside 5'-diphosphate + ATP = a 2'-deoxyribonucleoside 5'-triphosphate + ADP. It carries out the reaction a ribonucleoside 5'-diphosphate + ATP = a ribonucleoside 5'-triphosphate + ADP. Major role in the synthesis of nucleoside triphosphates other than ATP. The ATP gamma phosphate is transferred to the NDP beta phosphate via a ping-pong mechanism, using a phosphorylated active-site intermediate. In Prochlorococcus marinus (strain MIT 9211), this protein is Nucleoside diphosphate kinase.